A 200-amino-acid polypeptide reads, in one-letter code: MARYTGPSWKISRRLGISLSGTGKELEKRPYAPGPHGPGQRKKLSEYGLQLQEKQKLRHMYGVNERQFRTLFDKAAKLPGKQGENFMILLETRLDNLVYRLGLARTRRQARQLVNHGHILVDGSRVDIPSFSVKPGQTIALREKSQNLAVVKESVEVNSFVPEYLTFDAEKLEGTFTRLPERSELAPEISEQLIVEFYSR.

The disordered stretch occupies residues 22 to 42 (TGKELEKRPYAPGPHGPGQRK). Positions 92–155 (TRLDNLVYRL…QNLAVVKESV (64 aa)) constitute an S4 RNA-binding domain.

The protein belongs to the universal ribosomal protein uS4 family. As to quaternary structure, part of the 30S ribosomal subunit. Contacts protein S5. The interaction surface between S4 and S5 is involved in control of translational fidelity.

In terms of biological role, one of the primary rRNA binding proteins, it binds directly to 16S rRNA where it nucleates assembly of the body of the 30S subunit. Functionally, with S5 and S12 plays an important role in translational accuracy. In Bacillus pumilus (strain SAFR-032), this protein is Small ribosomal subunit protein uS4.